A 328-amino-acid polypeptide reads, in one-letter code: P2Y purinoceptor 6 (328 aa).

At Met1–Leu27 the chain is on the extracellular side. An N-linked (GlcNAc...) asparagine glycan is attached at Asn5. The chain crosses the membrane as a helical span at residues Leu28–Ile48. The Cytoplasmic segment spans residues Ala49 to Ala62. A helical membrane pass occupies residues Val63 to Ile83. Residues Tyr84 to Phe101 lie on the Extracellular side of the membrane. Cys99 and Cys177 form a disulfide bridge. A helical membrane pass occupies residues Val102–Phe122. Residues Gln123–Ala144 are Cytoplasmic-facing. Residues Trp145 to Phe165 traverse the membrane as a helical segment. Topologically, residues Ala166–Met194 are extracellular. Asn173 carries an N-linked (GlcNAc...) asparagine glycan. The helical transmembrane segment at Ala195–Met215 threads the bilayer. Topologically, residues Ala216–Lys236 are cytoplasmic. A helical membrane pass occupies residues Ala237–Ile257. The Extracellular portion of the chain corresponds to Thr258–Ala280. Residues Ala281–Phe303 traverse the membrane as a helical segment. At Thr304–Val328 the chain is on the cytoplasmic side.

This sequence belongs to the G-protein coupled receptor 1 family.

Its subcellular location is the cell membrane. Functionally, receptor for extracellular UTP &gt; ADP = 2-methylthio-ATP &gt; ADP-beta-S &gt; ATP = ATP-gamma-S. The activity of this receptor is mediated by G proteins which activate a phosphatidylinositol-calcium second messenger system. Functionally coupled to phospholipase C. In Mus musculus (Mouse), this protein is P2Y purinoceptor 6 (P2ry6).